The primary structure comprises 577 residues: MNIQALLSEKVRQAMIAAGAPADCEPQVRQSAKVQFGNYQANGMMAVAKKLGMAPRQLAEQVLTHLDLNGIASKVEIAGPGFINIFLDPAFLAEHVQQALASDRLGVAMPEKQTIVVDYSAPNVAKEMHVGHLRSTIIGDAAVRTLEFLGHKVIRANHVGDWGTQFGMLIAWLEKQQQENAGEMELADLEGFYRDAKKHYDEDEEFAERARNYVVKLQSGDEYFREMWRKLVDITMTQNQITYDRLNVTLTRDDVMGESLYNPMLPGIVADLKAKGLAVESEGATVVFLDEFKNKEGEPMGVIIQKKDGGYLYTTTDIACAKYRYETLHADRVLYYIDSRQHQHLMQAWAIVRKAGYVPESVPLEHHMFGMMLGKDGKPFKTRAGGTVKLADLLDEALERARRLVAEKNPDMPADELEKLANAVGIGAVKYADLSKNRTTDYIFDWDNMLAFEGNTAPYMQYAYTRVLSVFRKAEIDEEQLAAAPVIIREDREAQLAARLLQFEETLTVVAREGTPHVMCAYLYDLAGLFSGFYEHCPILSAENEEVRNSRLKLAQLTAKTLKLGLDTLGIETVERM.

Positions 122–132 match the 'HIGH' region motif; that stretch reads PNVAKEMHVGH.

Belongs to the class-I aminoacyl-tRNA synthetase family. As to quaternary structure, monomer.

It localises to the cytoplasm. It carries out the reaction tRNA(Arg) + L-arginine + ATP = L-arginyl-tRNA(Arg) + AMP + diphosphate. This chain is Arginine--tRNA ligase, found in Escherichia coli O1:K1 / APEC.